Here is a 342-residue protein sequence, read N- to C-terminus: UDP-3-O-acylglucosamine N-acyltransferase (342 aa).

His238 acts as the Proton acceptor in catalysis.

The protein belongs to the transferase hexapeptide repeat family. LpxD subfamily. As to quaternary structure, homotrimer.

It catalyses the reaction a UDP-3-O-[(3R)-3-hydroxyacyl]-alpha-D-glucosamine + a (3R)-hydroxyacyl-[ACP] = a UDP-2-N,3-O-bis[(3R)-3-hydroxyacyl]-alpha-D-glucosamine + holo-[ACP] + H(+). It participates in bacterial outer membrane biogenesis; LPS lipid A biosynthesis. Its function is as follows. Catalyzes the N-acylation of UDP-3-O-acylglucosamine using 3-hydroxyacyl-ACP as the acyl donor. Is involved in the biosynthesis of lipid A, a phosphorylated glycolipid that anchors the lipopolysaccharide to the outer membrane of the cell. The polypeptide is UDP-3-O-acylglucosamine N-acyltransferase (Tolumonas auensis (strain DSM 9187 / NBRC 110442 / TA 4)).